A 326-amino-acid polypeptide reads, in one-letter code: Fructose-1,6-bisphosphatase class 1 (326 aa).

4 residues coordinate Mg(2+): E90, D111, L113, and D114. Residues 114–117, Y222, and K253 each bind substrate; that span reads DGSS. E259 contributes to the Mg(2+) binding site.

It belongs to the FBPase class 1 family. In terms of assembly, homotetramer. It depends on Mg(2+) as a cofactor.

The protein resides in the cytoplasm. The enzyme catalyses beta-D-fructose 1,6-bisphosphate + H2O = beta-D-fructose 6-phosphate + phosphate. It functions in the pathway carbohydrate biosynthesis; gluconeogenesis. The polypeptide is Fructose-1,6-bisphosphatase class 1 (Citrifermentans bemidjiense (strain ATCC BAA-1014 / DSM 16622 / JCM 12645 / Bem) (Geobacter bemidjiensis)).